Here is a 362-residue protein sequence, read N- to C-terminus: UDP-N-acetylglucosamine--N-acetylmuramyl-(pentapeptide) pyrophosphoryl-undecaprenol N-acetylglucosamine transferase (362 aa).

Residues 15-17 (TGG), N127, R165, S191, I247, 266-271 (ALTVSE), and Q292 contribute to the UDP-N-acetyl-alpha-D-glucosamine site.

The protein belongs to the glycosyltransferase 28 family. MurG subfamily.

The protein resides in the cell inner membrane. It carries out the reaction di-trans,octa-cis-undecaprenyl diphospho-N-acetyl-alpha-D-muramoyl-L-alanyl-D-glutamyl-meso-2,6-diaminopimeloyl-D-alanyl-D-alanine + UDP-N-acetyl-alpha-D-glucosamine = di-trans,octa-cis-undecaprenyl diphospho-[N-acetyl-alpha-D-glucosaminyl-(1-&gt;4)]-N-acetyl-alpha-D-muramoyl-L-alanyl-D-glutamyl-meso-2,6-diaminopimeloyl-D-alanyl-D-alanine + UDP + H(+). It functions in the pathway cell wall biogenesis; peptidoglycan biosynthesis. In terms of biological role, cell wall formation. Catalyzes the transfer of a GlcNAc subunit on undecaprenyl-pyrophosphoryl-MurNAc-pentapeptide (lipid intermediate I) to form undecaprenyl-pyrophosphoryl-MurNAc-(pentapeptide)GlcNAc (lipid intermediate II). The protein is UDP-N-acetylglucosamine--N-acetylmuramyl-(pentapeptide) pyrophosphoryl-undecaprenol N-acetylglucosamine transferase of Shewanella sp. (strain ANA-3).